The primary structure comprises 248 residues: MSEAAQTLDGWYCLHDFRTIDWSAWKTLPNEEREAAISEFLALVDQWETTESEKQGSHAVYTIVGQKADILFMILRPTLDELHEIETALNKTKLADYLLPAYSYVSVVELSNYLASGSEDPYQIPEVRRRLYPILPKTNYICFYPMDKRRQGNDNWYMLSMEQRRELMRAHGMTGRKYAGKVTQIITGSVGLDDFEWGVTLFSDDALQFKKLVYEMRFDEVSARFGEFGSFFVGTRLPMENVSSFFHV.

Residues arginine 130, tyrosine 144, 144-148 (YPMDK), lysine 148, histidine 171, glutamine 184, and serine 222 each bind Fe-coproporphyrin III. Residue tyrosine 144 is part of the active site.

Belongs to the ChdC family. Type 1 subfamily. Homopentamer. Fe-coproporphyrin III is required as a cofactor.

The enzyme catalyses Fe-coproporphyrin III + 2 H2O2 + 2 H(+) = heme b + 2 CO2 + 4 H2O. It carries out the reaction Fe-coproporphyrin III + H2O2 + H(+) = harderoheme III + CO2 + 2 H2O. It catalyses the reaction harderoheme III + H2O2 + H(+) = heme b + CO2 + 2 H2O. The protein operates within porphyrin-containing compound metabolism; protoheme biosynthesis. In terms of biological role, involved in coproporphyrin-dependent heme b biosynthesis. Catalyzes the decarboxylation of Fe-coproporphyrin III (coproheme) to heme b (protoheme IX), the last step of the pathway. The reaction occurs in a stepwise manner with a three-propionate harderoheme intermediate. This Geobacillus stearothermophilus (strain DSM 13240 / CIP 106956 / 10) protein is Coproheme decarboxylase.